A 263-amino-acid chain; its full sequence is Hydroxyacylglutathione hydrolase (263 aa).

His56, His58, Asp60, His61, His115, Asp135, and His175 together coordinate Zn(2+).

The protein belongs to the metallo-beta-lactamase superfamily. Glyoxalase II family. Monomer. The cofactor is Zn(2+).

It catalyses the reaction an S-(2-hydroxyacyl)glutathione + H2O = a 2-hydroxy carboxylate + glutathione + H(+). It participates in secondary metabolite metabolism; methylglyoxal degradation; (R)-lactate from methylglyoxal: step 2/2. Its function is as follows. Thiolesterase that catalyzes the hydrolysis of S-D-lactoyl-glutathione to form glutathione and D-lactic acid. The chain is Hydroxyacylglutathione hydrolase from Nitrosococcus oceani (strain ATCC 19707 / BCRC 17464 / JCM 30415 / NCIMB 11848 / C-107).